The primary structure comprises 426 residues: Serine--tRNA ligase (426 aa).

Position 233–235 (233–235 (TAE)) interacts with L-serine. 264 to 266 (RSE) is an ATP binding site. Glutamate 287 serves as a coordination point for L-serine. 351-354 (EISS) is an ATP binding site. Serine 385 serves as a coordination point for L-serine.

The protein belongs to the class-II aminoacyl-tRNA synthetase family. Type-1 seryl-tRNA synthetase subfamily. Homodimer. The tRNA molecule binds across the dimer.

The protein localises to the cytoplasm. It catalyses the reaction tRNA(Ser) + L-serine + ATP = L-seryl-tRNA(Ser) + AMP + diphosphate + H(+). It carries out the reaction tRNA(Sec) + L-serine + ATP = L-seryl-tRNA(Sec) + AMP + diphosphate + H(+). It functions in the pathway aminoacyl-tRNA biosynthesis; selenocysteinyl-tRNA(Sec) biosynthesis; L-seryl-tRNA(Sec) from L-serine and tRNA(Sec): step 1/1. Catalyzes the attachment of serine to tRNA(Ser). Is also able to aminoacylate tRNA(Sec) with serine, to form the misacylated tRNA L-seryl-tRNA(Sec), which will be further converted into selenocysteinyl-tRNA(Sec). This Brachyspira hyodysenteriae (strain ATCC 49526 / WA1) protein is Serine--tRNA ligase.